Consider the following 156-residue polypeptide: Small ribosomal subunit protein uS7 (156 aa).

Belongs to the universal ribosomal protein uS7 family. Part of the 30S ribosomal subunit. Contacts proteins S9 and S11.

One of the primary rRNA binding proteins, it binds directly to 16S rRNA where it nucleates assembly of the head domain of the 30S subunit. Is located at the subunit interface close to the decoding center, probably blocks exit of the E-site tRNA. This Brevibacillus brevis (strain 47 / JCM 6285 / NBRC 100599) protein is Small ribosomal subunit protein uS7.